A 166-amino-acid polypeptide reads, in one-letter code: Short form salivary protein D7R1 (166 aa).

An N-terminal signal peptide occupies residues 1–21 (MFRKVFSVALVTCGLLVIVQA).

Belongs to the PBP/GOBP family. As to quaternary structure, interacts with host coagulation factor XII (F12) (inactive and activated) (via amino acids 1-77). Interacts with host high molecular weight kininogen (KNG1) (via amino acids 402-532). As to expression, female salivary gland (at protein level).

Its subcellular location is the secreted. Its activity is regulated as follows. Zn(2+) modulates binding to host coagulation factor XII (F12) and high molecular weight kininogen (KNG1). In terms of biological role, salivary protein with anticoagulant activity that targets the intrinsic blood coagulation pathway in the host. Inhibits activation of the host plasma contact system by preventing the reciprocal activation of host coagulation factor XII (F12) and prekallikrein (KLKB1). Attenuates generation of bradykinin in host plasma. May bind and sequester different mediators involved in the host response, such as serotonin and histamine. The sequence is that of Short form salivary protein D7R1 from Anopheles stephensi (Indo-Pakistan malaria mosquito).